A 276-amino-acid chain; its full sequence is Ribosomal RNA small subunit methyltransferase A (276 aa).

6 residues coordinate S-adenosyl-L-methionine: Asn15, Leu17, Gly42, Glu63, Asp88, and Asn111.

It belongs to the class I-like SAM-binding methyltransferase superfamily. rRNA adenine N(6)-methyltransferase family. RsmA subfamily.

The protein resides in the cytoplasm. The enzyme catalyses adenosine(1518)/adenosine(1519) in 16S rRNA + 4 S-adenosyl-L-methionine = N(6)-dimethyladenosine(1518)/N(6)-dimethyladenosine(1519) in 16S rRNA + 4 S-adenosyl-L-homocysteine + 4 H(+). In terms of biological role, specifically dimethylates two adjacent adenosines (A1518 and A1519) in the loop of a conserved hairpin near the 3'-end of 16S rRNA in the 30S particle. May play a critical role in biogenesis of 30S subunits. This is Ribosomal RNA small subunit methyltransferase A from Geobacter sulfurreducens (strain ATCC 51573 / DSM 12127 / PCA).